Consider the following 85-residue polypeptide: MSKQPISNVRSIQANINIPMGAFRPGAGQPPRRKESTPGTAEGAPATPEEKKPVPGMKKFPGPVVNLSEIQNVKSELKYVPKGEQ.

A disordered region spans residues 19–63; it reads PMGAFRPGAGQPPRRKESTPGTAEGAPATPEEKKPVPGMKKFPGP. Position 36 is a phosphoserine (Ser36). Thr47 carries the post-translational modification Phosphothreonine.

The protein belongs to the SMPX family.

Plays a role in the regulatory network through which muscle cells coordinate their structural and functional states during growth, adaptation, and repair. The sequence is that of Small muscular protein (Smpx) from Rattus norvegicus (Rat).